Reading from the N-terminus, the 385-residue chain is Probable tRNA sulfurtransferase (385 aa).

One can recognise a THUMP domain in the interval 57–160; sequence DGVIERVKKV…RGNAYVFTDK (104 aa). ATP-binding positions include 180–181, 205–206, arginine 262, glycine 284, and glutamine 293; these read ML and YY.

This sequence belongs to the ThiI family.

It is found in the cytoplasm. The enzyme catalyses [ThiI sulfur-carrier protein]-S-sulfanyl-L-cysteine + a uridine in tRNA + 2 reduced [2Fe-2S]-[ferredoxin] + ATP + H(+) = [ThiI sulfur-carrier protein]-L-cysteine + a 4-thiouridine in tRNA + 2 oxidized [2Fe-2S]-[ferredoxin] + AMP + diphosphate. The catalysed reaction is [ThiS sulfur-carrier protein]-C-terminal Gly-Gly-AMP + S-sulfanyl-L-cysteinyl-[cysteine desulfurase] + AH2 = [ThiS sulfur-carrier protein]-C-terminal-Gly-aminoethanethioate + L-cysteinyl-[cysteine desulfurase] + A + AMP + 2 H(+). It participates in cofactor biosynthesis; thiamine diphosphate biosynthesis. In terms of biological role, catalyzes the ATP-dependent transfer of a sulfur to tRNA to produce 4-thiouridine in position 8 of tRNAs, which functions as a near-UV photosensor. Also catalyzes the transfer of sulfur to the sulfur carrier protein ThiS, forming ThiS-thiocarboxylate. This is a step in the synthesis of thiazole, in the thiamine biosynthesis pathway. The sulfur is donated as persulfide by IscS. In Clostridium perfringens (strain SM101 / Type A), this protein is Probable tRNA sulfurtransferase.